Reading from the N-terminus, the 469-residue chain is Asparagine--tRNA ligase (469 aa).

It belongs to the class-II aminoacyl-tRNA synthetase family. As to quaternary structure, homodimer.

The protein resides in the cytoplasm. It catalyses the reaction tRNA(Asn) + L-asparagine + ATP = L-asparaginyl-tRNA(Asn) + AMP + diphosphate + H(+). This chain is Asparagine--tRNA ligase, found in Porphyromonas gingivalis (strain ATCC 33277 / DSM 20709 / CIP 103683 / JCM 12257 / NCTC 11834 / 2561).